An 81-amino-acid polypeptide reads, in one-letter code: Defensin-like protein 144 (81 aa).

The signal sequence occupies residues 1-24 (MKNSFRFSFTVITTFIICVLVSGA). Disulfide bonds link cysteine 30-cysteine 74, cysteine 42-cysteine 61, cysteine 47-cysteine 69, and cysteine 51-cysteine 71.

This sequence belongs to the DEFL family.

It localises to the secreted. The polypeptide is Defensin-like protein 144 (LCR10) (Arabidopsis thaliana (Mouse-ear cress)).